Reading from the N-terminus, the 618-residue chain is DNA mismatch repair protein MutL (618 aa).

Residues glutamate 367–glycine 381 show a composition bias toward low complexity. Positions glutamate 367 to glycine 402 are disordered. Residues glycine 382–serine 392 are compositionally biased toward gly residues.

Belongs to the DNA mismatch repair MutL/HexB family.

Its function is as follows. This protein is involved in the repair of mismatches in DNA. It is required for dam-dependent methyl-directed DNA mismatch repair. May act as a 'molecular matchmaker', a protein that promotes the formation of a stable complex between two or more DNA-binding proteins in an ATP-dependent manner without itself being part of a final effector complex. This is DNA mismatch repair protein MutL from Salmonella heidelberg (strain SL476).